Here is a 226-residue protein sequence, read N- to C-terminus: DNA mismatch repair protein MutH (226 aa).

Belongs to the MutH family.

It localises to the cytoplasm. Sequence-specific endonuclease that cleaves unmethylated GATC sequences. It is involved in DNA mismatch repair. This is DNA mismatch repair protein MutH from Actinobacillus pleuropneumoniae serotype 3 (strain JL03).